Here is a 326-residue protein sequence, read N- to C-terminus: JNK1/MAPK8-associated membrane protein homolog (326 aa).

The Lumenal portion of the chain corresponds to 1-71 (MSSLSGHAST…CESCDTPLQP (71 aa)). N-linked (GlcNAc...) asparagine glycosylation occurs at asparagine 27. A helical transmembrane segment spans residues 72-92 (YDWMYLLFIALLPLLLHMQFI). The Cytoplasmic portion of the chain corresponds to 93 to 108 (RIARKYCRTRYYEVSE). A helical membrane pass occupies residues 109-129 (YLCVILENVIACVIAVLIYPP). The Lumenal segment spans residues 130 to 166 (RFTFFLNGCSKTDIKEWYPACYNPRIGYTKTMRCTYE). A helical transmembrane segment spans residues 167-187 (VVFPLYSITFIHHLILIGSIL). At 188-208 (VLRSTLYCVLLYKTYNGKPFY) the chain is on the cytoplasmic side. The next 2 membrane-spanning stretches (helical) occupy residues 209-229 (AAIVSVPILAVIHAVLSGVVF) and 230-250 (YTFPYILLIGSLWAMCFHLAL). The Cytoplasmic portion of the chain corresponds to 251 to 269 (EGKRPLKEMIVRIATSPTH). Residues 270-290 (LIFLSITMLMLSFGVIAIIAP) form a helical membrane-spanning segment. The Lumenal segment spans residues 291-296 (LDIPYR). Residues 297–317 (WSFLCIVPVPFIFYMATIPFS) form a helical membrane-spanning segment. At 318 to 326 (NPTTTMRLS) the chain is on the cytoplasmic side.

The protein resides in the endoplasmic reticulum membrane. Facilitates degradation of misfolded endoplasmic reticulum (ER) proteins through the recruitment of components of the proteasome and endoplasmic reticulum-associated degradation (ERAD) system. Involved in ER stress response. In Caenorhabditis elegans, this protein is JNK1/MAPK8-associated membrane protein homolog.